The sequence spans 246 residues: UPF0736 protein GWCH70_0753 (246 aa).

Belongs to the UPF0736 family.

This Geobacillus sp. (strain WCH70) protein is UPF0736 protein GWCH70_0753.